The following is a 300-amino-acid chain: Phospholipase A1 (300 aa).

Cysteines 4 and 87 form a disulfide. The active-site Nucleophile is Ser137. The active-site Charge relay system is Asp165. Cystine bridges form between Cys176/Cys181 and Cys219/Cys227. His229 functions as the Charge relay system in the catalytic mechanism. 3 cysteine pairs are disulfide-bonded: Cys244/Cys268, Cys245/Cys293, and Cys261/Cys266.

It belongs to the AB hydrolase superfamily. Lipase family. Expressed by the venom gland.

It is found in the secreted. It carries out the reaction a 1,2-diacyl-sn-glycero-3-phosphocholine + H2O = a 2-acyl-sn-glycero-3-phosphocholine + a fatty acid + H(+). In terms of biological role, catalyzes the hydrolysis of phosphatidylcholine with phospholipase A1 activity. May act as an allergen and induce hemolytic activity. This is Phospholipase A1 from Vespula maculifrons (Eastern yellow jacket).